The following is a 231-amino-acid chain: 2,3-bisphosphoglycerate-dependent phosphoglycerate mutase (231 aa).

Substrate contacts are provided by residues 8–15 (RHGESEWN), 21–22 (TG), R60, 87–90 (ERHY), K98, 114–115 (RR), and 183–184 (GN). The active-site Tele-phosphohistidine intermediate is H9. Catalysis depends on E87, which acts as the Proton donor/acceptor.

Belongs to the phosphoglycerate mutase family. BPG-dependent PGAM subfamily.

The catalysed reaction is (2R)-2-phosphoglycerate = (2R)-3-phosphoglycerate. Its pathway is carbohydrate degradation; glycolysis; pyruvate from D-glyceraldehyde 3-phosphate: step 3/5. Functionally, catalyzes the interconversion of 2-phosphoglycerate and 3-phosphoglycerate. This Streptococcus equi subsp. zooepidemicus (strain H70) protein is 2,3-bisphosphoglycerate-dependent phosphoglycerate mutase.